The sequence spans 278 residues: Keratin-associated protein 5-1 (278 aa).

A run of 8 repeats spans residues 42-45 (CCVP), 48-51 (CCKP), 130-133 (CCVP), 136-139 (CCKP), 142-145 (CCVP), 239-242 (CCKP), 258-261 (CCKP), and 268-271 (CCVP). Positions 42 to 271 (CCVPVCCCKP…CCSQSSCCVP (230 aa)) are 8 X 4 AA repeats of C-C-X-P.

Belongs to the KRTAP type 5 family. In terms of assembly, interacts with hair keratins. In terms of tissue distribution, expressed in hair root but not in skin. Expressed also in lung, pancreas, ovary, testis.

In terms of biological role, in the hair cortex, hair keratin intermediate filaments are embedded in an interfilamentous matrix, consisting of hair keratin-associated protein (KRTAP), which are essential for the formation of a rigid and resistant hair shaft through their extensive disulfide bond cross-linking with abundant cysteine residues of hair keratins. The matrix proteins include the high-sulfur and high-glycine-tyrosine keratins. This is Keratin-associated protein 5-1 (KRTAP5-1) from Homo sapiens (Human).